The sequence spans 205 residues: Melanocortin-2 receptor accessory protein 2 (205 aa).

N-linked (GlcNAc...) asparagine glycosylation is present at Asn9. The helical transmembrane segment at 45-65 (IVIGFWVGLAVFVIFMFFVLT) threads the bilayer. Ser89 carries the phosphoserine modification.

The protein belongs to the MRAP family. As to quaternary structure, homodimer and heterodimer. Forms antiparallel homodimers and heterodimers with MRAP. Interacts with MC1R, MC2R, MC3R, MC4R and MC5R. Expressed in the adrenal gland and brain. Not expressed in other tissues.

It is found in the cell membrane. It localises to the endoplasmic reticulum membrane. In terms of biological role, modulator of melanocortin receptor 4 (MC4R), a receptor involved in energy homeostasis. Plays a central role in the control of energy homeostasis and body weight regulation by increasing ligand-sensitivity of MC4R and MC4R-mediated generation of cAMP. May also act as a negative regulator of MC2R: competes with MRAP for binding to MC2R and impairs the binding of corticotropin (ACTH) to MC2R. May also regulate activity of other melanocortin receptors (MC1R, MC3R and MC5R); however, additional evidence is required in vivo. The polypeptide is Melanocortin-2 receptor accessory protein 2 (MRAP2) (Homo sapiens (Human)).